A 356-amino-acid polypeptide reads, in one-letter code: uncharacterized protein (356 aa).

6 helical membrane-spanning segments follow: residues 7-29, 49-71, 91-113, 270-292, 299-316, and 329-348; these read LLSR…VSLY, YFLN…ISLI, ISPL…TFLL, LFYR…YLFF, QVIP…LVIL, and VLYS…KGVY.

The protein resides in the cell membrane. This is an uncharacterized protein from Aquifex aeolicus (strain VF5).